The sequence spans 531 residues: Sterol 26-hydroxylase, mitochondrial (531 aa).

The transit peptide at 1-33 directs the protein to the mitochondrion; the sequence is MAALGCARLRWALRGAGRGLCPHGARAKAAIPA. Lys283 bears the N6-acetyllysine mark. The sterol-binding stretch occupies residues 384–398; the sequence is PLLKAVLKETLRLYP. Cys476 contacts heme. N6-acetyllysine occurs at positions 509 and 520.

The protein belongs to the cytochrome P450 family. In terms of assembly, interacts with HSP70; this interaction is required for initial targeting to mitochondria. Heme is required as a cofactor. As to expression, expressed in the neural retina and underlying retinal pigment epithelium (at protein level). Expressed in the gray and white matter of cerebellum (at protein level).

It localises to the mitochondrion inner membrane. It carries out the reaction 5beta-cholestane-3alpha,7alpha,12alpha-triol + 6 reduced [adrenodoxin] + 3 O2 + 5 H(+) = (25R)-3alpha,7alpha,12alpha-trihydroxy-5beta-cholestan-26-oate + 6 oxidized [adrenodoxin] + 4 H2O. The catalysed reaction is cholestanol + 2 reduced [adrenodoxin] + O2 + 2 H(+) = (25R)-26-hydroxycholestanol + 2 oxidized [adrenodoxin] + H2O. The enzyme catalyses (25R)-3beta-hydroxycholest-5-en-7-one-26-al + 2 reduced [adrenodoxin] + O2 + H(+) = (25R)-3beta-hydroxycholest-5-en-7-one-26-oate + 2 oxidized [adrenodoxin] + H2O. It catalyses the reaction (25R)-3beta,26-dihydroxycholest-5-en-7-one + 2 reduced [adrenodoxin] + O2 + 2 H(+) = (25R)-3beta-hydroxycholest-5-en-7-one-26-al + 2 oxidized [adrenodoxin] + 2 H2O. It carries out the reaction 7-oxocholesterol + 2 reduced [adrenodoxin] + O2 + 2 H(+) = (25R)-3beta,26-dihydroxycholest-5-en-7-one + 2 oxidized [adrenodoxin] + H2O. The catalysed reaction is calciol + 2 reduced [adrenodoxin] + O2 + 2 H(+) = calcidiol + 2 oxidized [adrenodoxin] + H2O. The enzyme catalyses (25R)-5beta-cholestane-3alpha,7alpha,12alpha,26-tetrol + 2 reduced [adrenodoxin] + O2 + 2 H(+) = (25R)-3alpha,7alpha,12alpha-trihydroxy-5beta-cholestan-26-al + 2 oxidized [adrenodoxin] + 2 H2O. It catalyses the reaction 2 reduced [adrenodoxin] + cholesterol + O2 + 2 H(+) = (25R)-cholest-5-ene-3beta,26-diol + 2 oxidized [adrenodoxin] + H2O. It carries out the reaction (25R)-3beta,4beta-dihydroxycholest-5-en-26-al + 2 reduced [adrenodoxin] + O2 + H(+) = (25R)-3beta,4beta-dihydroxycholest-5-en-26-oate + 2 oxidized [adrenodoxin] + H2O. The catalysed reaction is (25R)-4beta,26-dihydroxycholesterol + 2 reduced [adrenodoxin] + O2 + 2 H(+) = (25R)-3beta,4beta-dihydroxycholest-5-en-26-al + 2 oxidized [adrenodoxin] + 2 H2O. The enzyme catalyses 4beta-hydroxycholesterol + 2 reduced [adrenodoxin] + O2 + 2 H(+) = (25R)-4beta,26-dihydroxycholesterol + 2 oxidized [adrenodoxin] + H2O. It catalyses the reaction (25R)-3beta-hydroxy-5-cholesten-26-al + 2 reduced [adrenodoxin] + O2 + H(+) = (25R)-3beta-hydroxy-5-cholestenoate + 2 oxidized [adrenodoxin] + H2O. It carries out the reaction (25R)-cholest-5-ene-3beta,26-diol + 2 reduced [adrenodoxin] + O2 + 2 H(+) = (25R)-3beta-hydroxy-5-cholesten-26-al + 2 oxidized [adrenodoxin] + 2 H2O. The catalysed reaction is (25R)-3alpha,7alpha,12alpha-trihydroxy-5beta-cholestan-26-al + 2 reduced [adrenodoxin] + O2 + H(+) = (25R)-3alpha,7alpha,12alpha-trihydroxy-5beta-cholestan-26-oate + 2 oxidized [adrenodoxin] + H2O. The enzyme catalyses 5beta-cholestane-3alpha,7alpha,12alpha-triol + 2 reduced [adrenodoxin] + O2 + 2 H(+) = (25R)-5beta-cholestane-3alpha,7alpha,12alpha,26-tetrol + 2 oxidized [adrenodoxin] + H2O. It participates in hormone biosynthesis; cholecalciferol biosynthesis. Its pathway is steroid metabolism; cholesterol degradation. It functions in the pathway lipid metabolism; bile acid biosynthesis. Functionally, cytochrome P450 monooxygenase that catalyzes regio- and stereospecific hydroxylation of cholesterol and its derivatives. Hydroxylates (with R stereochemistry) the terminal methyl group of cholesterol side-chain in a three step reaction to yield at first a C26 alcohol, then a C26 aldehyde and finally a C26 acid. Regulates cholesterol homeostasis by catalyzing the conversion of excess cholesterol to bile acids via both the 'neutral' (classic) and the 'acid' (alternative) pathways. May also regulate cholesterol homeostasis via generation of active oxysterols, which act as ligands for NR1H2 and NR1H3 nuclear receptors, modulating the transcription of genes involved in lipid metabolism. Plays a role in cholestanol metabolism in the cerebellum. Similarly to cholesterol, hydroxylates cholestanol and may facilitate sterol diffusion through the blood-brain barrier to the systemic circulation for further degradation. Also hydroxylates retinal 7-ketocholesterol, a noxious oxysterol with pro-inflammatory and pro-apoptotic effects, and may play a role in its elimination from the retinal pigment epithelium. May play a redundant role in vitamin D biosynthesis. Catalyzes 25-hydroxylation of vitamin D3 that is required for its conversion to a functionally active form. In Homo sapiens (Human), this protein is Sterol 26-hydroxylase, mitochondrial.